We begin with the raw amino-acid sequence, 506 residues long: Maturase K (506 aa).

Belongs to the intron maturase 2 family. MatK subfamily.

The protein resides in the plastid. It localises to the chloroplast. Usually encoded in the trnK tRNA gene intron. Probably assists in splicing its own and other chloroplast group II introns. The protein is Maturase K of Mentzelia lindleyi (Blazing star).